The primary structure comprises 254 residues: NAD-dependent protein deacylase 2 (254 aa).

Residues 1–254 (MDEHSIMQAV…LPALVRRLGV (254 aa)) enclose the Deacetylase sirtuin-type domain. Residue 24-44 (GAGMSADSGLETYRDPETGVW) coordinates NAD(+). The substrate site is built by Tyr-69 and Arg-72. 105–108 (QNID) contributes to the NAD(+) binding site. His-123 serves as the catalytic Proton acceptor. Residues Cys-131, Cys-134, Cys-157, and Cys-160 each contribute to the Zn(2+) site. NAD(+)-binding positions include 197-199 (GTS) and Ala-241.

This sequence belongs to the sirtuin family. Class III subfamily. It depends on Zn(2+) as a cofactor.

The protein localises to the cytoplasm. The enzyme catalyses N(6)-acetyl-L-lysyl-[protein] + NAD(+) + H2O = 2''-O-acetyl-ADP-D-ribose + nicotinamide + L-lysyl-[protein]. It carries out the reaction N(6)-succinyl-L-lysyl-[protein] + NAD(+) + H2O = 2''-O-succinyl-ADP-D-ribose + nicotinamide + L-lysyl-[protein]. NAD-dependent lysine deacetylase and desuccinylase that specifically removes acetyl and succinyl groups on target proteins. Modulates the activities of several proteins which are inactive in their acylated form. The sequence is that of NAD-dependent protein deacylase 2 from Corynebacterium efficiens (strain DSM 44549 / YS-314 / AJ 12310 / JCM 11189 / NBRC 100395).